Consider the following 102-residue polypeptide: Urease subunit beta (102 aa).

It belongs to the urease beta subunit family. In terms of assembly, heterotrimer of UreA (gamma), UreB (beta) and UreC (alpha) subunits. Three heterotrimers associate to form the active enzyme.

It localises to the cytoplasm. The enzyme catalyses urea + 2 H2O + H(+) = hydrogencarbonate + 2 NH4(+). It participates in nitrogen metabolism; urea degradation; CO(2) and NH(3) from urea (urease route): step 1/1. The protein is Urease subunit beta of Bordetella pertussis (strain Tohama I / ATCC BAA-589 / NCTC 13251).